A 329-amino-acid chain; its full sequence is Protein mlo2 (329 aa).

A UBR-type zinc finger spans residues 33–104 (DTCTYSMGYL…HSIPCNLRKS (72 aa)). A PHD-type zinc finger spans residues 120–179 (GRFCICDTVYNPETEEGTMFQCILCEDWFHEKCLQKTNKGIAIPDAETFEWLVCSECSEK).

This sequence belongs to the UBR7 family.

In terms of biological role, not known, interfere with mitotic chromosome segregation when overexpressed. In Schizosaccharomyces pombe (strain 972 / ATCC 24843) (Fission yeast), this protein is Protein mlo2 (mlo2).